The following is an 880-amino-acid chain: Alanine--tRNA ligase (880 aa).

His566, His570, Cys668, and His672 together coordinate Zn(2+).

It belongs to the class-II aminoacyl-tRNA synthetase family. Zn(2+) serves as cofactor.

The protein localises to the cytoplasm. The enzyme catalyses tRNA(Ala) + L-alanine + ATP = L-alanyl-tRNA(Ala) + AMP + diphosphate. Functionally, catalyzes the attachment of alanine to tRNA(Ala) in a two-step reaction: alanine is first activated by ATP to form Ala-AMP and then transferred to the acceptor end of tRNA(Ala). Also edits incorrectly charged Ser-tRNA(Ala) and Gly-tRNA(Ala) via its editing domain. This is Alanine--tRNA ligase from Alkaliphilus oremlandii (strain OhILAs) (Clostridium oremlandii (strain OhILAs)).